A 242-amino-acid polypeptide reads, in one-letter code: Small ribosomal subunit protein uS3 (242 aa).

The region spanning 39–109 (IRQYVKATLA…QIRINVVEVT (71 aa)) is the KH type-2 domain. The interval 220 to 242 (KVNQPKRRQQKRRQQYDDRSNEG) is disordered. Residues 223 to 232 (QPKRRQQKRR) are compositionally biased toward basic residues. The span at 233 to 242 (QQYDDRSNEG) shows a compositional bias: basic and acidic residues.

It belongs to the universal ribosomal protein uS3 family. As to quaternary structure, part of the 30S ribosomal subunit. Forms a tight complex with proteins S10 and S14.

Its function is as follows. Binds the lower part of the 30S subunit head. Binds mRNA in the 70S ribosome, positioning it for translation. The polypeptide is Small ribosomal subunit protein uS3 (Trichodesmium erythraeum (strain IMS101)).